The primary structure comprises 65 residues: Small ribosomal subunit protein bS21 (65 aa).

Belongs to the bacterial ribosomal protein bS21 family.

This is Small ribosomal subunit protein bS21 from Flavobacterium psychrophilum (strain ATCC 49511 / DSM 21280 / CIP 103535 / JIP02/86).